A 318-amino-acid polypeptide reads, in one-letter code: Lipoyl synthase 1 (318 aa).

Residues 6–32 (DTISNPLRPRHPEKVNRPDSASPPKPD) form a disordered region. Residues cysteine 60, cysteine 65, cysteine 71, cysteine 86, cysteine 90, cysteine 93, and serine 299 each contribute to the [4Fe-4S] cluster site. The Radical SAM core domain maps to 72–288 (WDKKHATFMI…EKVAYTKGFL (217 aa)).

It belongs to the radical SAM superfamily. Lipoyl synthase family. It depends on [4Fe-4S] cluster as a cofactor.

The protein resides in the cytoplasm. It catalyses the reaction [[Fe-S] cluster scaffold protein carrying a second [4Fe-4S](2+) cluster] + N(6)-octanoyl-L-lysyl-[protein] + 2 oxidized [2Fe-2S]-[ferredoxin] + 2 S-adenosyl-L-methionine + 4 H(+) = [[Fe-S] cluster scaffold protein] + N(6)-[(R)-dihydrolipoyl]-L-lysyl-[protein] + 4 Fe(3+) + 2 hydrogen sulfide + 2 5'-deoxyadenosine + 2 L-methionine + 2 reduced [2Fe-2S]-[ferredoxin]. It participates in protein modification; protein lipoylation via endogenous pathway; protein N(6)-(lipoyl)lysine from octanoyl-[acyl-carrier-protein]: step 2/2. Functionally, catalyzes the radical-mediated insertion of two sulfur atoms into the C-6 and C-8 positions of the octanoyl moiety bound to the lipoyl domains of lipoate-dependent enzymes, thereby converting the octanoylated domains into lipoylated derivatives. The protein is Lipoyl synthase 1 of Bradyrhizobium diazoefficiens (strain JCM 10833 / BCRC 13528 / IAM 13628 / NBRC 14792 / USDA 110).